Reading from the N-terminus, the 520-residue chain is MEGVLYKWTNYLSGWQPRWFLLCGGILSYYDSPEDAWKGCKGSIQMAVCEIQVHSVDNTRMDLIIPGEQYFYLKARSVAERQRWLVALGSAKACLTDSRTQKEKEFAENTENLKTKMSELRLYCDLLVQQVDKTKEVATAGVADSEEGIDVGTLLRSTCNTFLKTLEECMQIANAAFTSELLYHTPPGSPQLAVLKSSKMKHPIIPIHNSLERPIELNSCENGSLSVEVNGDEELLMKTKKSSLYLKSTKADCNISSEENTDGNTTVQGERMKEDGEENLESHDRDLAQPGSDSVCSPESPWEDSEEVIPTFFSTMNTSFSDIELLEDSGIPTEAFLASCYAVVPVLDKLGPTVFAPVKMDLVGNIKKVNQKYITNKEEFTTLQKIVLHEVEADVARVRNSATEALLWLKRGLKFLKGFLTEVKNGEKDIQTALNNAYGKTLRQHHGWVVRGVFALALRAAPSYEDFVAALTIKEGDHQKEAFSAGMQRDLSLYLPAMEKQLAILDTLYEIHGLESDEVV.

Residues 1 to 93 (MEGVLYKWTN…WLVALGSAKA (93 aa)) form the PH domain. The residue at position 139 (threonine 139) is a Phosphothreonine. Phosphoserine is present on serine 145. Residue threonine 153 is modified to Phosphothreonine. Positions 255-268 (ISSEENTDGNTTVQ) are enriched in polar residues. The disordered stretch occupies residues 255 to 303 (ISSEENTDGNTTVQGERMKEDGEENLESHDRDLAQPGSDSVCSPESPWE). The segment covering 270–287 (ERMKEDGEENLESHDRDL) has biased composition (basic and acidic residues). Residues 311–520 (TFFSTMNTSF…IHGLESDEVV (210 aa)) are glycolipid transfer protein homology domain.

As to quaternary structure, homodimer. Interacts with ARF1; the interaction together with phosphatidylinositol 4-phosphate binding is required for FAPP2 GlcCer transfer ability.

It is found in the golgi apparatus. It localises to the trans-Golgi network membrane. The protein localises to the membrane. Cargo transport protein that is required for apical transport from the trans-Golgi network (TGN). Transports AQP2 from the trans-Golgi network (TGN) to sites of AQP2 phosphorylation. Mediates the non-vesicular transport of glucosylceramide (GlcCer) from the trans-Golgi network (TGN) to the plasma membrane and plays a pivotal role in the synthesis of complex glycosphingolipids. Binding of both phosphatidylinositol 4-phosphate (PIP) and ARF1 are essential for the GlcCer transfer ability. Also required for primary cilium formation, possibly by being involved in the transport of raft lipids to the apical membrane, and for membrane tubulation. This is Pleckstrin homology domain-containing family A member 8 (Plekha8) from Rattus norvegicus (Rat).